A 499-amino-acid polypeptide reads, in one-letter code: tRNA (guanine(37)-N(1))-methyltransferase (499 aa).

The N-terminal 44 residues, 1–44 (MKIALPVFQKFNRLISSCKMSGVFPYNPPVNRQMRELDRSFFIT), are a transit peptide targeting the mitochondrion. S-adenosyl-L-methionine-binding positions include H268, 307-308 (DL), 335-336 (DG), and N399.

The protein belongs to the class I-like SAM-binding methyltransferase superfamily. TRM5/TYW2 family. Monomer.

Its subcellular location is the mitochondrion matrix. The protein resides in the nucleus. It is found in the cytoplasm. It catalyses the reaction guanosine(37) in tRNA + S-adenosyl-L-methionine = N(1)-methylguanosine(37) in tRNA + S-adenosyl-L-homocysteine + H(+). Specifically methylates the N1 position of guanosine-37 in various cytoplasmic and mitochondrial tRNAs. Methylation is not dependent on the nature of the nucleoside 5' of the target nucleoside. This is the first step in the biosynthesis of wybutosine (yW), a modified base adjacent to the anticodon of tRNAs and required for accurate decoding. Postspliced cytoplasmic tRNAs are imported into the nucleus, where this first step seems to take place, after which they are reexported to the cytoplasm, where the yW sythesis is completed by cytoplasmic enzymes. In Saccharomyces cerevisiae (strain ATCC 204508 / S288c) (Baker's yeast), this protein is tRNA (guanine(37)-N(1))-methyltransferase.